The following is a 732-amino-acid chain: Elongation factor 2 (732 aa).

The region spanning 19 to 230 is the tr-type G domain; sequence ERIRNMGIAA…VSFKDIVELT (212 aa). GTP contacts are provided by residues 28–35, 94–98, and 148–151; these read AHIDHGKT, DTPGH, and NKVD. Residue histidine 597 is modified to Diphthamide.

The protein belongs to the TRAFAC class translation factor GTPase superfamily. Classic translation factor GTPase family. EF-G/EF-2 subfamily.

It is found in the cytoplasm. Functionally, catalyzes the GTP-dependent ribosomal translocation step during translation elongation. During this step, the ribosome changes from the pre-translocational (PRE) to the post-translocational (POST) state as the newly formed A-site-bound peptidyl-tRNA and P-site-bound deacylated tRNA move to the P and E sites, respectively. Catalyzes the coordinated movement of the two tRNA molecules, the mRNA and conformational changes in the ribosome. This is Elongation factor 2 from Thermococcus gammatolerans (strain DSM 15229 / JCM 11827 / EJ3).